The chain runs to 4471 residues: Dynein axonemal heavy chain 10 (4471 aa).

Residues 1-1793 (MVPEEVEVEI…NIRQCTGTFG (1793 aa)) form a stem region. A disordered region spans residues 46–65 (TESLGQPLNREDEEMDKEIS). 4 coiled-coil regions span residues 203–223 (NVQKFASNIQRTMQQLEGEIK), 602–622 (QEVKQKYLEVGRTMKEYEDRK), 1071–1106 (KLLNESAKEELYNLHEEMEHLAKNLRKIPNTLEDLK), and 1217–1245 (VELLGVYERELARHEKSRQELANAEKLFD). Asn-1074 carries N-linked (GlcNAc...) asparagine glycosylation. The stretch at 1221–1254 (GVYERELARHEKSRQELANAEKLFDLPITMYPEL) is one TPR 1 repeat. 4 AAA regions span residues 1794–2015 (YGYE…VLVM), 2075–2294 (DAVE…VIVE), 2417–2665 (IHAP…VFNG), and 2765–3014 (EYNE…LRRS). Positions 1832 to 1839 (GPAGTGKT) match the GPAGTGKT motif motif. 1832–1839 (GPAGTGKT) contacts ATP. Positions 1882–1888 (CFDEFNR) match the CFDEFNR motif motif. Residues 2113-2120 (GPTRGGKS) and 2455-2462 (GESGTSKT) contribute to the ATP site. TPR repeat units lie at residues 2736 to 2769 (MALHEGEPRIYEDIQDYEAAKALFQEILEEYNES) and 2771 to 2797 (TKMNLVLFDDALEHLTRVHRIIRMDRG). Residues 2747–2770 (EDIQDYEAAKALFQEILEEYNESN) adopt a coiled-coil conformation. ATP is bound at residue 2803-2810 (GVGGSGKQ). Residues 3029 to 3313 (YSKLLDEKTQ…QKLQEEAEIM (285 aa)) are stalk. 3 coiled-coil regions span residues 3045 to 3131 (KRLD…LAEV), 3257 to 3327 (KREK…ISGL), and 3567 to 3638 (ERRE…EKTA). The AAA 5 stretch occupies residues 3399–3629 (LTDDVEISRW…TKSKATEVSE (231 aa)). The TPR 4 repeat unit spans residues 3802–3837 (WQEWYDLDSLEQFPVPLGYDNNITPFQKLLILRCFR). Residues 3845–4062 (VTDYVTVTMG…FQVCMEILNT (218 aa)) are AAA 6. The stretch at 4074–4108 (RIPWGSLKYLIGEVMYGGRAIDSFDRRILTIYMDE) is one TPR 5 repeat. The stretch at 4235–4260 (LLQELERFNKLVVRMTKSLAELQRAL) forms a coiled coil.

The protein belongs to the dynein heavy chain family. As to quaternary structure, consists of at least two heavy chains and a number of intermediate and light chains. Expressed primarily in trachea and testis, 2 tissues containing axonemal structures. Also expressed in brain but not in adult heart.

The protein resides in the cytoplasm. It localises to the cytoskeleton. The protein localises to the cilium axoneme. Force generating protein of respiratory cilia. Produces force towards the minus ends of microtubules. Dynein has ATPase activity; the force-producing power stroke is thought to occur on release of ADP. Involved in sperm motility; implicated in sperm flagellar assembly. Probable inner arm dynein heavy chain. This Homo sapiens (Human) protein is Dynein axonemal heavy chain 10 (DNAH10).